A 154-amino-acid polypeptide reads, in one-letter code: 6,7-dimethyl-8-ribityllumazine synthase (154 aa).

5-amino-6-(D-ribitylamino)uracil-binding positions include W22, 56-58 (AWE), and 80-82 (CVI). A (2S)-2-hydroxy-3-oxobutyl phosphate-binding site is contributed by 85-86 (DT). H88 functions as the Proton donor in the catalytic mechanism. N113 serves as a coordination point for 5-amino-6-(D-ribitylamino)uracil. R127 is a (2S)-2-hydroxy-3-oxobutyl phosphate binding site.

Belongs to the DMRL synthase family. As to quaternary structure, forms an icosahedral capsid composed of 60 subunits, arranged as a dodecamer of pentamers.

It carries out the reaction (2S)-2-hydroxy-3-oxobutyl phosphate + 5-amino-6-(D-ribitylamino)uracil = 6,7-dimethyl-8-(1-D-ribityl)lumazine + phosphate + 2 H2O + H(+). It functions in the pathway cofactor biosynthesis; riboflavin biosynthesis; riboflavin from 2-hydroxy-3-oxobutyl phosphate and 5-amino-6-(D-ribitylamino)uracil: step 1/2. Its function is as follows. Catalyzes the formation of 6,7-dimethyl-8-ribityllumazine by condensation of 5-amino-6-(D-ribitylamino)uracil with 3,4-dihydroxy-2-butanone 4-phosphate. This is the penultimate step in the biosynthesis of riboflavin. In Xanthomonas axonopodis pv. citri (strain 306), this protein is 6,7-dimethyl-8-ribityllumazine synthase.